A 360-amino-acid polypeptide reads, in one-letter code: uncharacterized protein (360 aa).

One can recognise a 4Fe-4S ferredoxin-type domain in the interval 11–40 (KEEVWDTNRCSGCGACVAVCPVNNLYFREE).

This sequence belongs to the FrhB family.

This is an uncharacterized protein from Methanocaldococcus jannaschii (strain ATCC 43067 / DSM 2661 / JAL-1 / JCM 10045 / NBRC 100440) (Methanococcus jannaschii).